The chain runs to 202 residues: IMP cyclohydrolase (202 aa).

This sequence belongs to the archaeal IMP cyclohydrolase family.

It catalyses the reaction IMP + H2O = 5-formamido-1-(5-phospho-D-ribosyl)imidazole-4-carboxamide. Its pathway is purine metabolism; IMP biosynthesis via de novo pathway; IMP from 5-formamido-1-(5-phospho-D-ribosyl)imidazole-4-carboxamide: step 1/1. Catalyzes the cyclization of 5-formylamidoimidazole-4-carboxamide ribonucleotide to IMP. In Methanosphaera stadtmanae (strain ATCC 43021 / DSM 3091 / JCM 11832 / MCB-3), this protein is IMP cyclohydrolase.